The following is a 480-amino-acid chain: Aspartyl/glutamyl-tRNA(Asn/Gln) amidotransferase subunit B (480 aa).

It belongs to the GatB/GatE family. GatB subfamily. As to quaternary structure, heterotrimer of A, B and C subunits.

It catalyses the reaction L-glutamyl-tRNA(Gln) + L-glutamine + ATP + H2O = L-glutaminyl-tRNA(Gln) + L-glutamate + ADP + phosphate + H(+). The enzyme catalyses L-aspartyl-tRNA(Asn) + L-glutamine + ATP + H2O = L-asparaginyl-tRNA(Asn) + L-glutamate + ADP + phosphate + 2 H(+). In terms of biological role, allows the formation of correctly charged Asn-tRNA(Asn) or Gln-tRNA(Gln) through the transamidation of misacylated Asp-tRNA(Asn) or Glu-tRNA(Gln) in organisms which lack either or both of asparaginyl-tRNA or glutaminyl-tRNA synthetases. The reaction takes place in the presence of glutamine and ATP through an activated phospho-Asp-tRNA(Asn) or phospho-Glu-tRNA(Gln). The polypeptide is Aspartyl/glutamyl-tRNA(Asn/Gln) amidotransferase subunit B (Streptococcus pneumoniae (strain CGSP14)).